The chain runs to 681 residues: DNA ligase (681 aa).

NAD(+) is bound by residues 34-38 (DAEYD), 83-84 (SL), and E115. Residue K117 is the N6-AMP-lysine intermediate of the active site. NAD(+)-binding residues include R138, E185, K301, and K325. 4 residues coordinate Zn(2+): C419, C422, C437, and C443. One can recognise a BRCT domain in the interval 602-681 (RKSDVLAGQT…AALLALIGER (80 aa)).

The protein belongs to the NAD-dependent DNA ligase family. LigA subfamily. Mg(2+) serves as cofactor. It depends on Mn(2+) as a cofactor.

The catalysed reaction is NAD(+) + (deoxyribonucleotide)n-3'-hydroxyl + 5'-phospho-(deoxyribonucleotide)m = (deoxyribonucleotide)n+m + AMP + beta-nicotinamide D-nucleotide.. In terms of biological role, DNA ligase that catalyzes the formation of phosphodiester linkages between 5'-phosphoryl and 3'-hydroxyl groups in double-stranded DNA using NAD as a coenzyme and as the energy source for the reaction. It is essential for DNA replication and repair of damaged DNA. This is DNA ligase from Chloroflexus aggregans (strain MD-66 / DSM 9485).